The primary structure comprises 273 residues: uncharacterized protein (273 aa).

This is an uncharacterized protein from Acheta domesticus (House cricket).